The following is a 122-amino-acid chain: Serum amyloid A-1 protein (122 aa).

The N-terminal stretch at Met1–Ser18 is a signal peptide. Residues Gln19 to Ala45 form an important for amyloid formation region. The tract at residues Ala100–Tyr122 is disordered.

Belongs to the SAA family. In terms of assembly, homohexamer; dimer of trimers. Can form amyloid fibrils after partial proteolysis; the native, undenatured protein does not form amyloid fibrils (in vitro). Apolipoprotein of the HDL complex. Binds to heparin. As to expression, detected in liver, spleen and kidney.

It is found in the secreted. Functionally, major acute phase protein. This is Serum amyloid A-1 protein (SAA1) from Mesocricetus auratus (Golden hamster).